A 396-amino-acid polypeptide reads, in one-letter code: Acetate kinase (396 aa).

Asparagine 8 serves as a coordination point for Mg(2+). Lysine 15 is an ATP binding site. Arginine 89 provides a ligand contact to substrate. The active-site Proton donor/acceptor is aspartate 146. ATP contacts are provided by residues 206-210 (HLGNG), 280-282 (DMR), and 328-332 (GVGEN). Glutamate 382 is a Mg(2+) binding site.

It belongs to the acetokinase family. In terms of assembly, homodimer. The cofactor is Mg(2+). Requires Mn(2+) as cofactor.

The protein resides in the cytoplasm. The catalysed reaction is acetate + ATP = acetyl phosphate + ADP. The protein operates within metabolic intermediate biosynthesis; acetyl-CoA biosynthesis; acetyl-CoA from acetate: step 1/2. Its function is as follows. Catalyzes the formation of acetyl phosphate from acetate and ATP. Can also catalyze the reverse reaction. The sequence is that of Acetate kinase from Clavibacter michiganensis subsp. michiganensis (strain NCPPB 382).